The primary structure comprises 344 residues: Protein pelota homolog (344 aa).

It belongs to the eukaryotic release factor 1 family. Pelota subfamily. In terms of assembly, monomer. Requires a divalent metal cation as cofactor.

The protein localises to the cytoplasm. In terms of biological role, may function in recognizing stalled ribosomes, interact with stem-loop structures in stalled mRNA molecules, and effect endonucleolytic cleavage of the mRNA. May play a role in the release non-functional ribosomes and degradation of damaged mRNAs. Has endoribonuclease activity. The chain is Protein pelota homolog from Saccharolobus islandicus (strain M.14.25 / Kamchatka #1) (Sulfolobus islandicus).